The primary structure comprises 432 residues: Ribosomal protein uS12 methylthiotransferase RimO (432 aa).

Residues 4 to 120 (HNVFLLSLGC…LLQAIGAQYR (117 aa)) form the MTTase N-terminal domain. Residues cysteine 13, cysteine 49, cysteine 83, cysteine 144, cysteine 148, and cysteine 151 each coordinate [4Fe-4S] cluster. A Radical SAM core domain is found at 130–359 (LTPPHISYLK…MELQETIAKE (230 aa)). The TRAM domain occupies 362–429 (QLFEGKELTV…AYELHGTITA (68 aa)).

The protein belongs to the methylthiotransferase family. RimO subfamily. It depends on [4Fe-4S] cluster as a cofactor.

The protein resides in the cytoplasm. The enzyme catalyses L-aspartate(89)-[ribosomal protein uS12]-hydrogen + (sulfur carrier)-SH + AH2 + 2 S-adenosyl-L-methionine = 3-methylsulfanyl-L-aspartate(89)-[ribosomal protein uS12]-hydrogen + (sulfur carrier)-H + 5'-deoxyadenosine + L-methionine + A + S-adenosyl-L-homocysteine + 2 H(+). Catalyzes the methylthiolation of an aspartic acid residue of ribosomal protein uS12. This chain is Ribosomal protein uS12 methylthiotransferase RimO, found in Chlorobium phaeobacteroides (strain DSM 266 / SMG 266 / 2430).